The following is a 214-amino-acid chain: Dynein axonemal assembly factor 6 (214 aa).

2 disordered regions span residues 1 to 22 (MESENMDSENMKTENMESQNVD) and 34 to 68 (ALSKLLNPEEEDDSDYGQTNGLSTIGAMGPGNIGP).

It belongs to the PIH1 family. As to quaternary structure, interacts with HSPA1A/B and HSP90AA1. Interacts with DNAAF2 and DNAAF4. Interacts wuth DNAI2. In terms of tissue distribution, expressed in testis, small intestine, prostate, adrenal gland, spleen, lung, bladder, breast and ovary. Expressed in ciliated epithelial cells.

The protein localises to the cytoplasm. It localises to the golgi apparatus. The protein resides in the trans-Golgi network. Functionally, plays a role in cytoplasmic pre-assembly of axonemal dynein. This Homo sapiens (Human) protein is Dynein axonemal assembly factor 6.